Here is a 294-residue protein sequence, read N- to C-terminus: Protoheme IX farnesyltransferase (294 aa).

The next 9 helical transmembrane spans lie at 13 to 33 (IIFGNLISVIGGFLLASKGVI), 35 to 55 (YPLFISTLLGVSLVVASGCVF), 84 to 104 (ISLIYASILGIAGIVLLYAAA), 107 to 127 (LAMQLAIIGFVVYVGVYSLYM), 132 to 152 (VYGTLIGSLSGAAPPVIGYCA), 162 to 182 (LILLLIFSLWQMPHSYAIAIF), 208 to 228 (IILYILAFMIATLMLAISGYA), 229 to 249 (GYKYLVVAAAVSVWWLGMALS), and 264 to 284 (FIFSIVAITSLSVMMSIDPHV).

Belongs to the UbiA prenyltransferase family. Protoheme IX farnesyltransferase subfamily.

Its subcellular location is the cell inner membrane. The catalysed reaction is heme b + (2E,6E)-farnesyl diphosphate + H2O = Fe(II)-heme o + diphosphate. Its pathway is porphyrin-containing compound metabolism; heme O biosynthesis; heme O from protoheme: step 1/1. In terms of biological role, converts heme B (protoheme IX) to heme O by substitution of the vinyl group on carbon 2 of heme B porphyrin ring with a hydroxyethyl farnesyl side group. The sequence is that of Protoheme IX farnesyltransferase from Photorhabdus laumondii subsp. laumondii (strain DSM 15139 / CIP 105565 / TT01) (Photorhabdus luminescens subsp. laumondii).